Consider the following 2230-residue polypeptide: MEPNNNISNSNNGGSGIDGDGKEDSIYSYGYSSTTNSYNGVGNNSNLDKDDLDVFSLLDSITNTSYLLKPPPKIQKPPSPFSYPIELDQEEASLKEQELKLLELRLELQNTIIANSLINNNNNSNNNNNDNNNNNNNNNNNNNNNNNIQLNNSSLTPPIINISLPTTPSTVNLTPKKPNLYINTKLPNENDDIIITPIVPLSGTITPPIPVDSPISFAETEQIIVVPQLQLLDEIINTTDNIGGGAAEKLQNIDPEIIIKLETEIKISSDEKENKEGGQVENKEEKEKLDQKLENENENEKVKEKEKEDEKEEQQVKVKEKEKEKENENEKNHNDKNDDDDDDEDNEKDKISKTTVSVSIKVSNENTPIINATDSSSNSINSSSNNSIATTPGRLSSSGLINHKKYDEFIEPTFFLSTASIGLNRLKSSNGASGSNSGNVSPSGPTPILSTLFQKNNSKQDLLKNSSENSFCNNNNNNNNNNNNNNNNNNNNNNNNNNSNNSNINNNNNNNSSNNNNNNNNNNNNNNNNNNNNNNNNNNNNNNNNNNNNNNNNNINGFSTIKSSSSSSPTNSPSSSLNIMNFFNTGSISSIVGSGSSSLGKGSSKKIKDSYSNNNNNSSTADLSEQVLLANMDNPFSSIPGRIKKNLDRRGATIANPQQLTSLIKSGNTAKLQKFFGLEKEDLLAVNIIQQQQLQLQHQHQQHQQAHQHQHQQQQQHQQQLKSRSNTTNTPLMMFSVSENNSPNNSPPVSPPSSPMLSPLSSSPPSWISGTSPARKLRGRAATGSLLSGSSSNNNTTTTTTTTTSNSNSLSNNNRSNSFVDSRPFLPPVKTMPNIGGGQYNTTPPLLPSQTGDHVVKTPKDYHRKPKLLIAKLLKNNSLYMEKEKEKEKEKEKNESSKLDIKNFAASGGQLSLSSNQIISNNSNSSSNNNNNNNNNNNNNNNNNNGLSNNIVINNSNNNSNNNSASSSPTSSNSGYLNESNFILSSSSKESLSALMKDRIGYDLFKIFCKELVNKQGTNLVNILLFIEEVESFQSGIFNTDQLVLEETDRIFYKFILESTAAEFDINIPKRYFYQINHHIKEKIPNKYVFEKVLKALKDETSADAFKRFCILHSTTNGTSAPTNSTTIHSPSLAVPLSSSSWNGLSKETSNSLVNNNTTPNTSTASPSITASSSSTSINNNTTTATATTVTTPVIVHQRHHSSTVSGHYGGHRNHLQHVKLSHSNSPSPSSSPPDSYTSNQPLIFNGSPLGVSGSDYSFNKFGNNSLVPPNLNISQASGGGSGNSNNNNNNELIINIKGLSPPTSHISSPPLSPRLSMIRPHFTNGSMKSSLFQQQLQPTGSINSSPINNHQVSGGCGGDQTTELQTETLDDFIPHGVAFGFKRGACKPPCDCLTYQSEGDKGGACLNCGHYPALHKNLGKISNSNNSIDIDSLQQQQQHQQIHHQSNLLPNTLLNLSNVTMASGALSPSTLNQQQHQILQQQQQQQQQQQQQQQQQQQQQQQQQQQQQQQHQQHQQFQPNPSPSPPLTPSSNSIIQPSQQQQPQQIVNTLINSSSDNTLVLPTIPNITNTPPSPTQTLPLPSSSSSSLVIPNSNINSSPTSPSLSYNNNSNSNSNAGVGSIPLSFNEIVNSNNSPNINNNGIINTSSNNNINNTNASINGSANQLFNNPMTFSGNEIVLPPIVQSSGGSLFTDSPLSSPKRIHFHNGIGNGDLLNNRAVLHSTVSNNNNINSNNNNNNNNNNNNNNNNNNNNNNNNNNNNNNNSNNNNGNDSLAILQKLIANGGSLKNAIYSLNNRSNSSNNLMSNNNINNSNIPNRLLNNRSNSSNSLMSSNNKNNYNNYNSNNNHIYSNEELTEIHQQQQLQQQQQQQQQLQQQQQQQQQQQQQQQQQQQQQQQQQQQQQQENNTTTTTTTTSNRPFRSNNPTISQELDTKVLMNFNNWAIDGEEIVFLNKLGEGTSAKVYRATWRNQEVAVKVLRSEPESQKLLDFLKELEIMSSLRSPHVVYFYGMVLDPKICMIMEYCSNQTLYHLMHLQMNFTWDWVFKFAIEMVRGVNCLHSWKPVIVHRDLKSLNLLVSDNWTIKVADFGLSRFATAKSASNRTTRGTFAYCAPEVFYGIHTTKGDIFSIGIILWELAVRCIKSKYEKPFSEFKHIQYDFQILVQTSKFNLRPTIPQNCPEAFSNLISNCWESSPDNRPSCPEILDSLLDMEKKYTENKRKWDKIREKPKK.

The segment covering 1 to 12 has biased composition (low complexity); it reads MEPNNNISNSNN. Disordered stretches follow at residues 1–22, 121–152, 270–352, 368–397, 430–451, 464–574, 593–620, 699–849, and 915–974; these read MEPN…GDGK, NNNS…QLNN, DEKE…DKIS, PIIN…RLSS, NGAS…ILST, KNSS…NSPS, GSGS…NSST, QHQQ…LLPS, and SNQI…SSNS. Positions 270-336 are enriched in basic and acidic residues; the sequence is DEKENKEGGQ…NENEKNHNDK (67 aa). Over residues 337–346 the composition is skewed to acidic residues; sequence NDDDDDDEDN. Composition is skewed to low complexity over residues 375 to 388, 430 to 447, 473 to 574, 593 to 602, 610 to 619, and 699 to 721; these read SSSN…NNSI, NGAS…GPTP, NNNN…NSPS, GSGSSSLGKG, SYSNNNNNSS, and QHQQ…QQQL. A compositionally biased stretch (polar residues) spans 722–731; it reads KSRSNTTNTP. A compositionally biased stretch (pro residues) spans 745-754; that stretch reads NSPPVSPPSS. Composition is skewed to low complexity over residues 755–766 and 783–818; these read PMLSPLSSSPPS and TGSL…RSNS. Polar residues predominate over residues 840-849; it reads YNTTPPLLPS. The RGS domain occupies 991–1119; it reads SLSALMKDRI…CILHSTTNGT (129 aa). Disordered stretches follow at residues 1146–1181, 1220–1243, 1300–1362, 1506–1546, 1563–1611, 1725–1771, 1802–1848, and 1905–1929; these read SKET…INNN, KLSH…NQPL, LSPP…GDQT, QQQQ…QPQQ, PTIP…NNNS, VSNN…NNGN, NNLM…NNNH, and ENNT…TISQ. Composition is skewed to low complexity over residues 1149 to 1181 and 1222 to 1239; these read TSNS…INNN and SHSN…SYTS. Over residues 1324–1353 the composition is skewed to polar residues; it reads TNGSMKSSLFQQQLQPTGSINSSPINNHQV. 2 stretches are compositionally biased toward low complexity: residues 1506–1520 and 1530–1546; these read QQQQ…QFQP and PSSN…QPQQ. Positions 1726–1769 are enriched in low complexity; the sequence is SNNNNINSNNNNNNNNNNNNNNNNNNNNNNNNNNNNNNNSNNNN. Positions 1905–1915 are enriched in low complexity; sequence ENNTTTTTTTT. Polar residues predominate over residues 1916 to 1929; that stretch reads SNRPFRSNNPTISQ. A Protein kinase domain is found at 1949–2208; sequence IVFLNKLGEG…SCPEILDSLL (260 aa). ATP contacts are provided by residues 1955–1963 and lysine 1976; that span reads LGEGTSAKV. Aspartate 2069 acts as the Proton acceptor in catalysis.

It belongs to the protein kinase superfamily. TKL Ser/Thr protein kinase family.

It carries out the reaction L-seryl-[protein] + ATP = O-phospho-L-seryl-[protein] + ADP + H(+). The catalysed reaction is L-threonyl-[protein] + ATP = O-phospho-L-threonyl-[protein] + ADP + H(+). This chain is Probable serine/threonine-protein kinase DDB_G0267686, found in Dictyostelium discoideum (Social amoeba).